A 149-amino-acid polypeptide reads, in one-letter code: Glutamate mutase sigma subunit (149 aa).

Residues 5–138 (DPTVVLGTIG…DAVKTELDVD (134 aa)) enclose the B12-binding domain. Adenosylcob(III)alamin-binding positions include 15-19 (SDAHA), His18, 63-65 (SSL), and 94-98 (NLAVG).

Belongs to the methylaspartate mutase GlmS subunit family. As to quaternary structure, heterotetramer composed of 2 epsilon subunits (GlmE) and 2 sigma subunits (GlmS). GlmE exists as a homodimer and GlmS as a monomer. The cofactor is adenosylcob(III)alamin.

It catalyses the reaction (2S,3S)-3-methyl-L-aspartate = L-glutamate. It participates in amino-acid degradation; L-glutamate degradation via mesaconate pathway; acetate and pyruvate from L-glutamate: step 1/4. Catalyzes the carbon skeleton rearrangement of L-glutamate to L-threo-3-methylaspartate ((2S,3S)-3-methylaspartate). This chain is Glutamate mutase sigma subunit, found in Halobacterium salinarum (strain ATCC 700922 / JCM 11081 / NRC-1) (Halobacterium halobium).